A 179-amino-acid chain; its full sequence is ATP synthase subunit delta (179 aa).

It belongs to the ATPase delta chain family. In terms of assembly, F-type ATPases have 2 components, F(1) - the catalytic core - and F(0) - the membrane proton channel. F(1) has five subunits: alpha(3), beta(3), gamma(1), delta(1), epsilon(1). F(0) has three main subunits: a(1), b(2) and c(10-14). The alpha and beta chains form an alternating ring which encloses part of the gamma chain. F(1) is attached to F(0) by a central stalk formed by the gamma and epsilon chains, while a peripheral stalk is formed by the delta and b chains.

Its subcellular location is the cell inner membrane. Functionally, f(1)F(0) ATP synthase produces ATP from ADP in the presence of a proton or sodium gradient. F-type ATPases consist of two structural domains, F(1) containing the extramembraneous catalytic core and F(0) containing the membrane proton channel, linked together by a central stalk and a peripheral stalk. During catalysis, ATP synthesis in the catalytic domain of F(1) is coupled via a rotary mechanism of the central stalk subunits to proton translocation. In terms of biological role, this protein is part of the stalk that links CF(0) to CF(1). It either transmits conformational changes from CF(0) to CF(1) or is implicated in proton conduction. This Anaeromyxobacter dehalogenans (strain 2CP-C) protein is ATP synthase subunit delta.